Here is a 638-residue protein sequence, read N- to C-terminus: Stress-activated protein kinase alpha (638 aa).

ANK repeat units lie at residues 43-72 (YGQS…TLKA), 80-109 (NGFS…NVDV), 113-146 (DLNT…NVNA), 150-181 (NGET…NVNL), 185-214 (FQES…DVDC), and 219-248 (ERKT…LFDW). The SAM domain occupies 240 to 303 (KKYKDLFDWL…LKETSNLANE (64 aa)). Positions 351–620 (LEYTEKLGAG…RLVTIENEYR (270 aa)) constitute a Protein kinase domain. ATP is bound by residues 357-365 (LGAGSSGKV) and K378. D472 functions as the Proton acceptor in the catalytic mechanism.

This sequence belongs to the protein kinase superfamily. TKL Ser/Thr protein kinase family. As to quaternary structure, interacts with F-actin. In terms of processing, autophosphorylated.

The protein resides in the cytoplasm. Its subcellular location is the cytoskeleton. It catalyses the reaction L-seryl-[protein] + ATP = O-phospho-L-seryl-[protein] + ADP + H(+). The catalysed reaction is L-threonyl-[protein] + ATP = O-phospho-L-threonyl-[protein] + ADP + H(+). Its function is as follows. May be involved in cortical F-actin organization and resistance to osmotic stress. Activated upon cell detachment, in vitro. This chain is Stress-activated protein kinase alpha (spkA-1), found in Dictyostelium discoideum (Social amoeba).